A 958-amino-acid polypeptide reads, in one-letter code: Glycine dehydrogenase (decarboxylating) (958 aa).

An N6-(pyridoxal phosphate)lysine modification is found at Lys-708.

The protein belongs to the GcvP family. In terms of assembly, the glycine cleavage system is composed of four proteins: P, T, L and H. Requires pyridoxal 5'-phosphate as cofactor.

The catalysed reaction is N(6)-[(R)-lipoyl]-L-lysyl-[glycine-cleavage complex H protein] + glycine + H(+) = N(6)-[(R)-S(8)-aminomethyldihydrolipoyl]-L-lysyl-[glycine-cleavage complex H protein] + CO2. The glycine cleavage system catalyzes the degradation of glycine. The P protein binds the alpha-amino group of glycine through its pyridoxal phosphate cofactor; CO(2) is released and the remaining methylamine moiety is then transferred to the lipoamide cofactor of the H protein. The protein is Glycine dehydrogenase (decarboxylating) of Proteus mirabilis (strain HI4320).